Consider the following 288-residue polypeptide: Killer cell lectin-like receptor 2 (288 aa).

Over 1-45 (MSEQEVTYTTLRFHKSSGLQNPVRPEETQRPRDVGHRECSVPWKF) the chain is Cytoplasmic. Residues 46-66 (IVIVLGILCFLLLLTVAVLVI) traverse the membrane as a helical; Signal-anchor for type II membrane protein segment. The Extracellular segment spans residues 67–288 (HIFRDGQEKH…SALQRDEDES (222 aa)). Residues asparagine 94, asparagine 105, and asparagine 114 are each glycosylated (N-linked (GlcNAc...) asparagine). In terms of domain architecture, C-type lectin spans 144-263 (QVEGYWFCCG…THGCICEKRL (120 aa)). 4 disulfides stabilise this stretch: cysteine 151–cysteine 156, cysteine 169–cysteine 257, cysteine 173–cysteine 259, and cysteine 238–cysteine 251. An N-linked (GlcNAc...) asparagine glycan is attached at asparagine 177.

Homodimer; disulfide-linked.

It is found in the membrane. In terms of biological role, receptor on natural killer (NK) cells for class I MHC. The protein is Killer cell lectin-like receptor 2 (Klra2) of Mus musculus (Mouse).